The following is a 211-amino-acid chain: Envelope protein UL45 homolog (211 aa).

Topologically, residues 1–46 are intravirion; the sequence is MMSPTPEDDRDLVVVRGRLRMMDNGAEHDRERRSYTAWPHLCCGCT. Residues 47 to 67 traverse the membrane as a helical; Signal-anchor for type II membrane protein segment; sequence IGIILTMFVIATTLLLASLFA. The Virion surface portion of the chain corresponds to 68 to 211; the sequence is FSYMSLESGT…SSILSNAIMK (144 aa). Residues asparagine 96 and asparagine 133 are each glycosylated (N-linked (GlcNAc...) asparagine; by host).

The protein belongs to the herpesviridae HHV-1 UL45 family.

It localises to the virion membrane. In Gallid herpesvirus 2 (strain Chicken/Md5/ATCC VR-987) (GaHV-2), this protein is Envelope protein UL45 homolog (UL45H).